We begin with the raw amino-acid sequence, 224 residues long: Flagellar L-ring protein (224 aa).

The signal sequence occupies residues 1–15 (MARYLVLAVALLLAA). Residue Cys-16 is the site of N-palmitoyl cysteine attachment. The S-diacylglycerol cysteine moiety is linked to residue Cys-16.

This sequence belongs to the FlgH family. In terms of assembly, the basal body constitutes a major portion of the flagellar organelle and consists of four rings (L,P,S, and M) mounted on a central rod.

The protein resides in the cell outer membrane. It is found in the bacterial flagellum basal body. Functionally, assembles around the rod to form the L-ring and probably protects the motor/basal body from shearing forces during rotation. In Shewanella baltica (strain OS223), this protein is Flagellar L-ring protein.